Consider the following 428-residue polypeptide: Methyl-branched lipid omega-hydroxylase (428 aa).

Position 379 (cysteine 379) interacts with heme.

The protein belongs to the cytochrome P450 family. Heme is required as a cofactor.

It catalyses the reaction a methyl-branched lipid + O2 + 2 reduced ferredoxin [iron-sulfur] cluster + 2 H(+) = an omega-hydroxy-methyl-branched lipid + H2O + 2 oxidized ferredoxin [iron-sulfur] cluster.. The catalysed reaction is cholest-4-en-3-one + 6 reduced [2Fe-2S]-[ferredoxin] + 3 O2 + 5 H(+) = (25R)-3-oxocholest-4-en-26-oate + 6 oxidized [2Fe-2S]-[ferredoxin] + 4 H2O. It participates in lipid metabolism; branched-chain fatty acid metabolism. Primarily hydroxylates the omega-carbon of a number of methyl-branched lipids, including (2E,6E)-farnesol, phytanate, geranylgeraniol, 15-methylpalmitate and (2E,6E)-farnesyl diphosphate. Also catalyzes the sequential oxidation of the terminal methyl of cholest-4-en-3-one into (25R)-26-hydroxycholest-4-en-3-one (alcohol), (25R)-26-oxocholest-4-en-3-one (aldehyde), to finally yield the carboxylic acid (25R)-3-oxocholest-4-en-26-oate. Also able to sequentially oxidize cholesterol itself, not only cholest-4-en-3-one. The polypeptide is Methyl-branched lipid omega-hydroxylase (cyp124) (Mycobacterium tuberculosis (strain CDC 1551 / Oshkosh)).